The following is a 210-amino-acid chain: Large ribosomal subunit protein bL9 (210 aa).

The disordered stretch occupies residues 172-210 (EAAAAALEPDSEEEFEAATPPSELAAEASDEDADDAKEA). Residues 199 to 210 (ASDEDADDAKEA) are compositionally biased toward acidic residues.

The protein belongs to the bacterial ribosomal protein bL9 family.

In terms of biological role, binds to the 23S rRNA. This chain is Large ribosomal subunit protein bL9, found in Sphingopyxis alaskensis (strain DSM 13593 / LMG 18877 / RB2256) (Sphingomonas alaskensis).